The chain runs to 397 residues: 16-O-methyltransferase bsc6 (397 aa).

Asp-262 serves as a coordination point for S-adenosyl-L-methionine. The Proton acceptor role is filled by His-302.

It belongs to the class I-like SAM-binding methyltransferase superfamily. Cation-independent O-methyltransferase family. S-adenosyl-L-methionine is required as a cofactor.

It functions in the pathway mycotoxin biosynthesis. Functionally, 16-O-methyltransferase; part of the gene cluster that mediates the biosynthesis of the diterpene glucoside brassicicene C. In the first step of the brassicicene C biosynthesis, the bifunctional diterpene synthase bsc8 that possesses both prenyl transferase and terpene cyclase activity, converts isopentenyl diphosphate and dimethylallyl diphosphate into geranylgeranyl diphosphate (GGDP) that is further converted into fusicocca-2,10(14)-diene, the first precursor for brassicicene C. Fusicocca-2,10(14)-diene is then substrate of cytochrome P450 monooxygenase bsc1 for hydroxylation at the C-8 position. Oxidation at C-16 position to aldehyde is then catalyzed by the cytochrome P450 monooyxygenase bsc7, yielding fusicocca-2,10(14)-diene-8-beta,16-diol. Follows the isomerization of the double bond and reduction of aldehyde to alcohol catalyzed by the short-chain dehydrogenase/reductase bsc3 to yield the diol compound fusicocca-1,10(14)-diene-8 beta,16-diol. The next step is the oxidation at the C-3 position of fusicocca-2,10(14)-diene-8-beta,16-diol catalyzed by the alpha-ketoglutarate dependent dioxygenase bsc9, to produce a triol compound. Methylation of the hydroxy group at position 16 is performed by the methyltransferase bsc6. 16-O-methylation is followed by oxidation at the C-13 position to ketone and an alkyl shift of the methyl group leads to brassicicene C. Although the probable acetyltransferase bsc4 is included in the gene cluster, no acetylation reactions are necessary for brassicicene C biosynthesis. However, the fact that brassicicene E, which is a structurally related compound having an acetoxy group at position 12, was previously isolated from another strain of A.brassicicola suggests that the ATCC 96836 strain might also produce a small amount of brassicicene E. In Alternaria brassicicola (Dark leaf spot agent), this protein is 16-O-methyltransferase bsc6.